The following is a 227-amino-acid chain: 7-cyano-7-deazaguanine synthase (227 aa).

8 to 18 is an ATP binding site; the sequence is FSGGQDSTTCL. Zn(2+)-binding residues include Cys187, Cys196, Cys199, and Cys202.

This sequence belongs to the QueC family. Zn(2+) is required as a cofactor.

It carries out the reaction 7-carboxy-7-deazaguanine + NH4(+) + ATP = 7-cyano-7-deazaguanine + ADP + phosphate + H2O + H(+). It functions in the pathway purine metabolism; 7-cyano-7-deazaguanine biosynthesis. Functionally, catalyzes the ATP-dependent conversion of 7-carboxy-7-deazaguanine (CDG) to 7-cyano-7-deazaguanine (preQ(0)). The chain is 7-cyano-7-deazaguanine synthase from Aliivibrio salmonicida (strain LFI1238) (Vibrio salmonicida (strain LFI1238)).